We begin with the raw amino-acid sequence, 158 residues long: Ribonuclease H (158 aa).

Residues 1–147 enclose the RNase H type-1 domain; it reads MKVTIYTDGA…CDVLATTAAD (147 aa). Residues D8, E52, D74, and D139 each coordinate Mg(2+).

It belongs to the RNase H family. As to quaternary structure, monomer. It depends on Mg(2+) as a cofactor.

Its subcellular location is the cytoplasm. It catalyses the reaction Endonucleolytic cleavage to 5'-phosphomonoester.. In terms of biological role, endonuclease that specifically degrades the RNA of RNA-DNA hybrids. This is Ribonuclease H from Lachnoclostridium phytofermentans (strain ATCC 700394 / DSM 18823 / ISDg) (Clostridium phytofermentans).